Here is a 493-residue protein sequence, read N- to C-terminus: Endothelial lipase (493 aa).

An N-terminal signal peptide occupies residues 1–23; sequence MRDPVFLLGFWSLYCCFPAGSLT. A disulfide bond links C66 and C79. N-linked (GlcNAc...) asparagine glycans are attached at residues N67 and N82. The active-site Nucleophile is the S171. The active-site Charge relay system is D195. C254 and C274 are joined by a disulfide. Catalysis depends on H276, which acts as the Charge relay system. Intrachain disulfides connect C299–C318 and C310–C313. 327 to 339 contacts heparin; it reads KMRKKRNSKMYLK. The region spanning 349–484 is the PLAT domain; it reads YHYQLKVHMF…SPGQELWFYK (136 aa). N-linked (GlcNAc...) asparagine glycosylation is present at N395. C465 and C485 are joined by a disulfide.

Belongs to the AB hydrolase superfamily. Lipase family. Head to tail Homodimer. Interacts with apolipoprotein C-2.

It localises to the secreted. It catalyses the reaction a triacylglycerol + H2O = a diacylglycerol + a fatty acid + H(+). The catalysed reaction is a 1,2-diacyl-sn-glycero-3-phosphocholine + H2O = a 2-acyl-sn-glycero-3-phosphocholine + a fatty acid + H(+). It carries out the reaction 1,2,3-tri-(9Z-octadecenoyl)-glycerol + H2O = di-(9Z)-octadecenoylglycerol + (9Z)-octadecenoate + H(+). The enzyme catalyses 1,2,3-tributanoylglycerol + H2O = dibutanoylglycerol + butanoate + H(+). It catalyses the reaction 1,2-dihexadecanoyl-sn-glycero-3-phosphocholine + H2O = hexadecanoyl-sn-glycero-3-phosphocholine + hexadecanoate + H(+). Exerts both phospholipase and triglyceride lipase activities. More active as a phospholipase than a triglyceride lipase. Hydrolyzes triglycerides, both with short-chain fatty acyl groups (tributyrin) and long-chain fatty acyl groups (triolein) with similar levels of activity toward both types of substrates. Hydrolyzes high density lipoproteins (HDL) more efficiently than other lipoproteins. The protein is Endothelial lipase (Lipg) of Rattus norvegicus (Rat).